A 357-amino-acid chain; its full sequence is Tetraacyldisaccharide 4'-kinase (357 aa).

ATP is bound at residue S67 to T74.

Belongs to the LpxK family.

The enzyme catalyses a lipid A disaccharide + ATP = a lipid IVA + ADP + H(+). It participates in glycolipid biosynthesis; lipid IV(A) biosynthesis; lipid IV(A) from (3R)-3-hydroxytetradecanoyl-[acyl-carrier-protein] and UDP-N-acetyl-alpha-D-glucosamine: step 6/6. In terms of biological role, transfers the gamma-phosphate of ATP to the 4'-position of a tetraacyldisaccharide 1-phosphate intermediate (termed DS-1-P) to form tetraacyldisaccharide 1,4'-bis-phosphate (lipid IVA). This is Tetraacyldisaccharide 4'-kinase from Syntrophotalea carbinolica (strain DSM 2380 / NBRC 103641 / GraBd1) (Pelobacter carbinolicus).